Here is a 130-residue protein sequence, read N- to C-terminus: Small ribosomal subunit protein uS8 (130 aa).

It belongs to the universal ribosomal protein uS8 family. Part of the 30S ribosomal subunit. Contacts proteins S5 and S12.

One of the primary rRNA binding proteins, it binds directly to 16S rRNA central domain where it helps coordinate assembly of the platform of the 30S subunit. The sequence is that of Small ribosomal subunit protein uS8 from Shewanella pealeana (strain ATCC 700345 / ANG-SQ1).